A 196-amino-acid chain; its full sequence is UMP-CMP kinase (196 aa).

An ATP-binding site is contributed by 13–18 (GAGKGT). A Phosphoserine modification is found at Ser33. The NMP stretch occupies residues 33-63 (SAGELLRDERKNPDSQYGELIEKYIKDGKIV). Residue Arg39 participates in a ribonucleoside 5'-phosphate binding. 2 positions are modified to N6-acetyllysine: Lys43 and Lys55. A ribonucleoside 5'-phosphate-binding positions include 61–63 (KIV) and 93–96 (GFPR). Asn100 is a CMP binding site. Residue Lys106 is modified to N6-succinyllysine. An LID region spans residues 133-143 (ERGKSSGRSDD). ATP is bound at residue Arg134. The a ribonucleoside 5'-phosphate site is built by Arg140 and Arg151. ATP is bound at residue Lys179. Position 180 is a phosphoserine (Ser180).

Belongs to the adenylate kinase family. UMP-CMP kinase subfamily. As to quaternary structure, monomer. Requires Mg(2+) as cofactor.

Its subcellular location is the nucleus. It localises to the cytoplasm. It carries out the reaction CMP + ATP = CDP + ADP. The catalysed reaction is dCMP + ATP = dCDP + ADP. The enzyme catalyses UMP + ATP = UDP + ADP. It catalyses the reaction a 2'-deoxyribonucleoside 5'-diphosphate + ATP = a 2'-deoxyribonucleoside 5'-triphosphate + ADP. It carries out the reaction a ribonucleoside 5'-diphosphate + ATP = a ribonucleoside 5'-triphosphate + ADP. Its function is as follows. Catalyzes the phosphorylation of pyrimidine nucleoside monophosphates at the expense of ATP. Plays an important role in de novo pyrimidine nucleotide biosynthesis. Has preference for UMP and CMP as phosphate acceptors. Also displays broad nucleoside diphosphate kinase activity. This chain is UMP-CMP kinase, found in Sus scrofa (Pig).